A 253-amino-acid polypeptide reads, in one-letter code: Zinc finger protein GIS (253 aa).

A compositionally biased stretch (acidic residues) spans 1–10 (MDEATGETET). The interval 1–85 (MDEATGETET…GDNSTDNNSI (85 aa)) is disordered. 3 stretches are compositionally biased toward polar residues: residues 11-21 (QDFMNVESFSQ), 49-63 (SITT…PYQT), and 76-85 (GDNSTDNNSI). The segment at 91 to 113 (FECHYCFRNFPTSQALGGHQNAH) adopts a C2H2-type zinc-finger fold.

Expressed in inflorescence meristems, floral meristems and stem epidermis.

Its subcellular location is the nucleus. Functionally, probable transcription factor required for the initiation of inflorescence trichomes in response to gibberellin (GA). Mediates the induction of GL1 expression by GA in inflorescence organs and is antagonized in its action by the DELLA repressor GAI. Acts upstream of the trichome initiation regulators GL1 and GL3, and downstream of the GA signaling repressor SPINDLY (SPY). Does not play a significant role in the cytokinin response. Controls trichome branching through GA signaling. Acts downstream of the key regulator STICHEL (STI) in an endoreduplication-independent pathway. Controls trichome cell division indirectly by acting downstream of a key endoreduplication regulator SIAMESE (SIM). This is Zinc finger protein GIS (GIS) from Arabidopsis thaliana (Mouse-ear cress).